A 350-amino-acid polypeptide reads, in one-letter code: Uroporphyrinogen decarboxylase (350 aa).

Substrate contacts are provided by residues 28–32 (RQAGR), F47, D78, Y155, S210, and H325.

This sequence belongs to the uroporphyrinogen decarboxylase family. In terms of assembly, homodimer.

It is found in the cytoplasm. It catalyses the reaction uroporphyrinogen III + 4 H(+) = coproporphyrinogen III + 4 CO2. It participates in porphyrin-containing compound metabolism; protoporphyrin-IX biosynthesis; coproporphyrinogen-III from 5-aminolevulinate: step 4/4. Catalyzes the decarboxylation of four acetate groups of uroporphyrinogen-III to yield coproporphyrinogen-III. The protein is Uroporphyrinogen decarboxylase of Nostoc sp. (strain PCC 7120 / SAG 25.82 / UTEX 2576).